The following is a 121-amino-acid chain: MTVFLPILVCLCGGVGASCRYLLDVTIKTYWQRAFPLSTFTINLIAGFLAGLVAALALGGTLDEPWRLVLATGFLGGFSTFSTAINEMVTLFRKHRYPTAAAYLVLSLGVPVVAAACGFLV.

4 consecutive transmembrane segments (helical) span residues Val3 to Leu23, Phe40 to Gly60, Val69 to Val89, and Ala101 to Val121. Residues Gly76 and Ser79 each contribute to the Na(+) site.

The protein belongs to the fluoride channel Fluc/FEX (TC 1.A.43) family.

It is found in the cell membrane. It catalyses the reaction fluoride(in) = fluoride(out). Na(+) is not transported, but it plays an essential structural role and its presence is essential for fluoride channel function. Its function is as follows. Fluoride-specific ion channel. Important for reducing fluoride concentration in the cell, thus reducing its toxicity. The sequence is that of Fluoride-specific ion channel FluC 3 from Bifidobacterium longum (strain NCC 2705).